The sequence spans 1051 residues: Kinesin-like protein KIN-4B (1051 aa).

Residues 1 to 21 (MESHSSLSSSSSSSPPSSLSS) form a disordered region. The region spanning 25–380 (CVKVAVNVRP…LKYANRARNI (356 aa)) is the Kinesin motor domain. Residue 104 to 111 (GQTGSGKT) coordinates ATP. Coiled-coil stretches lie at residues 414 to 448 (ATSS…RSKR) and 540 to 644 (RQHF…KMKQ). A compositionally biased stretch (low complexity) spans 916–925 (SSSYSGSSRS). Disordered regions lie at residues 916–946 (SSSY…SSTY) and 1029–1051 (MSKS…FQGA).

This sequence belongs to the TRAFAC class myosin-kinesin ATPase superfamily. Kinesin family. KIN-4 subfamily. Homodimer.

In terms of biological role, kinesin-like motor protein involved in the control of the oriented deposition of cellulose microfibrils. This chain is Kinesin-like protein KIN-4B, found in Arabidopsis thaliana (Mouse-ear cress).